The chain runs to 308 residues: Aspartate carbamoyltransferase catalytic subunit (308 aa).

Residues arginine 49 and threonine 50 each coordinate carbamoyl phosphate. An L-aspartate-binding site is contributed by lysine 77. The carbamoyl phosphate site is built by arginine 99, histidine 127, and glutamine 130. 2 residues coordinate L-aspartate: arginine 160 and arginine 211. Alanine 252 and proline 253 together coordinate carbamoyl phosphate.

Belongs to the aspartate/ornithine carbamoyltransferase superfamily. ATCase family. As to quaternary structure, heterododecamer (2C3:3R2) of six catalytic PyrB chains organized as two trimers (C3), and six regulatory PyrI chains organized as three dimers (R2).

It carries out the reaction carbamoyl phosphate + L-aspartate = N-carbamoyl-L-aspartate + phosphate + H(+). It participates in pyrimidine metabolism; UMP biosynthesis via de novo pathway; (S)-dihydroorotate from bicarbonate: step 2/3. Catalyzes the condensation of carbamoyl phosphate and aspartate to form carbamoyl aspartate and inorganic phosphate, the committed step in the de novo pyrimidine nucleotide biosynthesis pathway. This chain is Aspartate carbamoyltransferase catalytic subunit, found in Geobacillus thermodenitrificans (strain NG80-2).